A 414-amino-acid chain; its full sequence is MANSC domain-containing protein 1 (414 aa).

Residues 1 to 24 (MLFRGTSLAYSLLVISFLTPRSSA) form the signal peptide. Residues 25-369 (GQNCLTKSLE…HGLSFEKWLL (345 aa)) lie on the Extracellular side of the membrane. Residues 32–116 (SLEDVVIDIQ…LKPAKGLVTY (85 aa)) enclose the MANSC domain. Residues N128, N234, and N335 are each glycosylated (N-linked (GlcNAc...) asparagine). Positions 311 to 339 (FQGGSTLTSDPRHGKSSTSESSITNKTAS) are disordered. Polar residues predominate over residues 326-338 (SSTSESSITNKTA). A helical membrane pass occupies residues 370–392 (IGTLLCGVLFLVIGLVLLGRMLV). Residues 393–414 (EALRRKRYSRLDYLINGIYVDI) lie on the Cytoplasmic side of the membrane.

The protein localises to the membrane. This chain is MANSC domain-containing protein 1 (Mansc1), found in Mus musculus (Mouse).